The primary structure comprises 734 residues: Photosystem I P700 chlorophyll a apoprotein A2 (734 aa).

Transmembrane regions (helical) follow at residues 46 to 69 (IFAS…FHVA), 135 to 158 (LYTG…LHLQ), 175 to 199 (LNHH…HVAI), 273 to 291 (MAHH…GHMY), 330 to 353 (IHFQ…QHMY), 369 to 395 (AALY…IFFI), 417 to 439 (AIIS…LYVH), and 517 to 535 (FLVH…LILV). 2 residues coordinate [4Fe-4S] cluster: Cys559 and Cys568. The next 2 helical transmembrane spans lie at 575–596 (AFYL…YWHW) and 643–665 (LSVW…MFLI). Residues His654, Met662, and Tyr670 each contribute to the chlorophyll a site. Trp671 provides a ligand contact to phylloquinone. Residues 707 to 727 (LVGLAHFSVGYIFTYAAFLIA) traverse the membrane as a helical segment.

This sequence belongs to the PsaA/PsaB family. As to quaternary structure, the PsaA/B heterodimer binds the P700 chlorophyll special pair and subsequent electron acceptors. PSI consists of a core antenna complex that captures photons, and an electron transfer chain that converts photonic excitation into a charge separation. The eukaryotic PSI reaction center is composed of at least 11 subunits. P700 is a chlorophyll a/chlorophyll a' dimer, A0 is one or more chlorophyll a, A1 is one or both phylloquinones and FX is a shared 4Fe-4S iron-sulfur center. serves as cofactor.

It localises to the plastid. It is found in the chloroplast thylakoid membrane. The enzyme catalyses reduced [plastocyanin] + hnu + oxidized [2Fe-2S]-[ferredoxin] = oxidized [plastocyanin] + reduced [2Fe-2S]-[ferredoxin]. PsaA and PsaB bind P700, the primary electron donor of photosystem I (PSI), as well as the electron acceptors A0, A1 and FX. PSI is a plastocyanin-ferredoxin oxidoreductase, converting photonic excitation into a charge separation, which transfers an electron from the donor P700 chlorophyll pair to the spectroscopically characterized acceptors A0, A1, FX, FA and FB in turn. Oxidized P700 is reduced on the lumenal side of the thylakoid membrane by plastocyanin. The sequence is that of Photosystem I P700 chlorophyll a apoprotein A2 from Crucihimalaya wallichii (Rock-cress).